We begin with the raw amino-acid sequence, 130 residues long: Small ribosomal subunit protein uS9 (130 aa).

It belongs to the universal ribosomal protein uS9 family.

In Onion yellows phytoplasma (strain OY-M), this protein is Small ribosomal subunit protein uS9.